The sequence spans 185 residues: Ribosome-recycling factor (185 aa).

This sequence belongs to the RRF family.

The protein resides in the cytoplasm. In terms of biological role, responsible for the release of ribosomes from messenger RNA at the termination of protein biosynthesis. May increase the efficiency of translation by recycling ribosomes from one round of translation to another. The protein is Ribosome-recycling factor of Serratia proteamaculans (strain 568).